The following is a 286-amino-acid chain: uncharacterized protein (286 aa).

The next 2 helical transmembrane spans lie at 201–221 (VIYS…LCET) and 231–251 (AIIL…YLMM).

The protein localises to the cell membrane. This is an uncharacterized protein from Methanocaldococcus jannaschii (strain ATCC 43067 / DSM 2661 / JAL-1 / JCM 10045 / NBRC 100440) (Methanococcus jannaschii).